A 132-amino-acid polypeptide reads, in one-letter code: Small ribosomal subunit protein uS8 (132 aa).

This sequence belongs to the universal ribosomal protein uS8 family. In terms of assembly, part of the 30S ribosomal subunit. Contacts proteins S5 and S12.

Functionally, one of the primary rRNA binding proteins, it binds directly to 16S rRNA central domain where it helps coordinate assembly of the platform of the 30S subunit. This is Small ribosomal subunit protein uS8 from Bacillus subtilis (strain 168).